Reading from the N-terminus, the 401-residue chain is Beta-ketoadipyl-CoA thiolase (401 aa).

The active-site Acyl-thioester intermediate is Cys91. Residues His357 and Cys387 each act as proton acceptor in the active site.

It belongs to the thiolase-like superfamily. Thiolase family.

It carries out the reaction succinyl-CoA + acetyl-CoA = 3-oxoadipyl-CoA + CoA. The protein operates within aromatic compound metabolism; beta-ketoadipate pathway; acetyl-CoA and succinyl-CoA from 3-oxoadipate: step 2/2. Its function is as follows. Catalyzes thiolytic cleavage of beta-ketoadipyl-CoA to succinyl-CoA and acetyl-CoA. The protein is Beta-ketoadipyl-CoA thiolase (pcaF) of Pseudomonas aeruginosa (strain ATCC 15692 / DSM 22644 / CIP 104116 / JCM 14847 / LMG 12228 / 1C / PRS 101 / PAO1).